Here is a 153-residue protein sequence, read N- to C-terminus: Fucose mutarotase (153 aa).

The active-site Proton donor is His-24. Asp-32 is a substrate binding site. Asp-69 is an active-site residue. Substrate-binding residues include Met-78, Tyr-119, Tyr-137, and Asn-139. Tyr-119 is an active-site residue.

It belongs to the RbsD / FucU family.

It carries out the reaction alpha-L-fucose = beta-L-fucose. Involved in the interconversion between alpha- and beta-L-fucoses. The polypeptide is Fucose mutarotase (fuom) (Danio rerio (Zebrafish)).